The sequence spans 463 residues: Membrane-bound lytic murein transglycosylase F (463 aa).

An N-terminal signal peptide occupies residues Met-1–Ala-33. Residues Leu-34–Ile-272 form a non-LT domain region. The segment at Arg-273–Ile-463 is LT domain. The active site involves Glu-317.

In the N-terminal section; belongs to the bacterial solute-binding protein 3 family. It in the C-terminal section; belongs to the transglycosylase Slt family.

Its subcellular location is the cell outer membrane. The catalysed reaction is Exolytic cleavage of the (1-&gt;4)-beta-glycosidic linkage between N-acetylmuramic acid (MurNAc) and N-acetylglucosamine (GlcNAc) residues in peptidoglycan, from either the reducing or the non-reducing ends of the peptidoglycan chains, with concomitant formation of a 1,6-anhydrobond in the MurNAc residue.. Murein-degrading enzyme that degrades murein glycan strands and insoluble, high-molecular weight murein sacculi, with the concomitant formation of a 1,6-anhydromuramoyl product. Lytic transglycosylases (LTs) play an integral role in the metabolism of the peptidoglycan (PG) sacculus. Their lytic action creates space within the PG sacculus to allow for its expansion as well as for the insertion of various structures such as secretion systems and flagella. The chain is Membrane-bound lytic murein transglycosylase F from Alteromonas mediterranea (strain DSM 17117 / CIP 110805 / LMG 28347 / Deep ecotype).